An 87-amino-acid chain; its full sequence is AKGDTRRCGYLMMRGCRGDTTATRAWGFNYEEKKCQQETVICGTGGAPRNAFETKQDCDALCEGYSGPQYSMQEMLQHLKENAKKTG.

The 55-residue stretch at 8 to 62 (CGYLMMRGCRGDTTATRAWGFNYEEKKCQQETVICGTGGAPRNAFETKQDCDALC) folds into the BPTI/Kunitz inhibitor domain. Intrachain disulfides connect Cys8-Cys62, Cys16-Cys42, and Cys35-Cys58. Residues 17 to 19 (RGD) carry the Cell attachment site motif.

The N-terminus is blocked. As to expression, expressed in salivary glands.

It is found in the cytoplasmic vesicle. The protein resides in the secretory vesicle. It localises to the secreted. Tick salivary platelet aggregation inhibitor that plays an important part in the anti-hemostatic strategy of ticks. Inhibits platelet aggregation induced by ADP (IC(50)~150 nM), collagen, and platelet activating factor (PAF). Acts by binding to platelet membrane glycoprotein IIb-IIIa (ITGA2B/ITGB3) in a metal ion dependent manner. Does not inhibit aggregation induced by ristocecin, an agonist that aggregates platelets independently from the glycoprotein IIb-IIIa (ITGA2B/ITGB3). In contrast to other tick platelet aggregation inhibitors, this protein does not protect ITGA2B/ITGB3 from dissociation under SDS condition, suggesting it may dissocate much faster than its orthologs. This Argas monolakensis (Mono lake bird tick) protein is Monogrin 1.